Here is a 180-residue protein sequence, read N- to C-terminus: Large ribosomal subunit protein bL17 (180 aa).

Residues 134–180 form a disordered region; the sequence is AQAKAKKAAAMPTEESEAKPAEEGDVVGASEPDAKAPEEPPTEAPEN.

It belongs to the bacterial ribosomal protein bL17 family. Part of the 50S ribosomal subunit. Contacts protein L32.

The polypeptide is Large ribosomal subunit protein bL17 (Mycobacterium tuberculosis (strain CDC 1551 / Oshkosh)).